Reading from the N-terminus, the 630-residue chain is YTH domain-containing family protein 1 (630 aa).

Disordered regions lie at residues 38 to 113 (DMTQ…YMQQ), 160 to 183 (YYPQGAQFPNHGPMPQNSMLAGPY), and 200 to 241 (QVGD…QSGH). Positions 70 to 102 (PGQQQQHQYGSPPNTNGNAQPMPQAHGNNTMNS) are enriched in polar residues. In terms of domain architecture, YTH spans 382 to 590 (EKYFILKSLT…SVGRKLTGLF (209 aa)).

Belongs to the YTHDF family. YTHDF1 subfamily.

Its subcellular location is the cytoplasm. It is found in the P-body. Its function is as follows. Specifically recognizes and binds N6-methyladenosine (m6A)-containing mRNAs, and regulates their stability. M6A is a modification present at internal sites of mRNAs and some non-coding RNAs and plays a role in mRNA stability and processing. Plays a role in pathogenicity towards plant host. The protein is YTH domain-containing family protein 1 of Pyricularia oryzae (strain 70-15 / ATCC MYA-4617 / FGSC 8958) (Rice blast fungus).